Here is a 199-residue protein sequence, read N- to C-terminus: ATP synthase subunit a (199 aa).

A run of 5 helical transmembrane segments spans residues 2–22 (NQVYFLDIFMFVFVLQFLFYF), 53–73 (VISVFTFIILLTCCFGGYFTY), 80–100 (MVEFTFVYAAVAWLSTLLTFI), 141–161 (LTVNIMVGHLISMMLYQGLEL), and 169–189 (WLSIFAIMMECFVFFIQSYIF).

The protein belongs to the ATPase A chain family. As to quaternary structure, F-type ATPases have 2 components, CF(1) - the catalytic core - and CF(0) - the membrane proton channel. CF(1) has five subunits: alpha(3), beta(3), gamma(1), delta(1), epsilon(1). CF(0) has three main subunits: a, b and c.

It is found in the mitochondrion inner membrane. Functionally, mitochondrial membrane ATP synthase (F(1)F(0) ATP synthase or Complex V) produces ATP from ADP in the presence of a proton gradient across the membrane which is generated by electron transport complexes of the respiratory chain. F-type ATPases consist of two structural domains, F(1) - containing the extramembraneous catalytic core and F(0) - containing the membrane proton channel, linked together by a central stalk and a peripheral stalk. During catalysis, ATP synthesis in the catalytic domain of F(1) is coupled via a rotary mechanism of the central stalk subunits to proton translocation. Key component of the proton channel; it may play a direct role in the translocation of protons across the membrane. This is ATP synthase subunit a (atp6) from Caenorhabditis briggsae.